We begin with the raw amino-acid sequence, 864 residues long: MPCVQLPAKESALFKRVLKCYEQKQYKNGLKFCKMILSNPKFAEHGETLAMKGLILNCLGKREEAYEFVRKGLRSDVRSHVCWHVYGLLQRSDKKYDEAIKCYRNALKLDKDNLQILRDLSLLQIQMRDLEGYRETRYQLLQLRPTQRASWIGYAIAYHLLKDYDTALKLLEEFRQTQQVPPNKIAYEYSELLLYQNQVMREANLFQESLEHIETYEKLICDKLLVEEIKGEMLLKLGRLKEASEVFRNLIDWNAENWCYYEGLEKALQLRSLDERLQLYEEVSKQHPRAVSPRRLPLSFAPGKKFRELMDKFLRPNFSKGCPPLFTTLKSLYCDTEKVSIIQELVTNYEASLKMNGYFSPYENGEKEPPTTLIWVQYFLAQHYDKLGQYFLALEYINAVIASTPTLIELFYMKAKIYKHMGNLKEAAQWMDEAQSLDTADRFINSKCAKYMLRANMIKEAEEMCSRFTREGTSAMENLNEMQCMWFETECISAYQRLGRYGDALKKCHEVERHFLEITDDQFDFHTYCMRKMTLRAYVGLLRLEDALRRHTFYFKAARSAIEIYLKLHDNPLTNDSKQQDIDSENLSAKEMKKMLSKQRRAQKKAKVEEERKHTERERQQKNQKKKREEEEEVTSGHKEELIPEKLERVDNPLEEAIKFLTPLKTLAAESIDTHLLAFEIYFRKGKFLLMLQSVKRAFAIESNNPWLHECLIKFSKSVSNHSNLPDIVSKVLAQEMKKIFVNKDLHSFNEDFLRHNATSLQHLLAGAKMMYFLDKSRQEKAIATATRLDETIKNKNVKTLIKVSEALLDGSFGNCSSQYEEYRKTCHSLLPLTPAFLPAAREALGLSAELNHTADHKLLMNEI.

TPR repeat units lie at residues 46–79 (GETL…DVRS), 80–113 (HVCW…DKDN), 148–184 (RASW…PPNK), 224–257 (LLVE…NAEN), 374–407 (IWVQ…TPTL), 408–441 (IELF…DTAD), and 485–514 (MWFE…VERH). The tract at residues 594-646 (KMLSKQRRAQKKAKVEEERKHTERERQQKNQKKKREEEEEVTSGHKEELIPEK) is disordered. Positions 595-605 (MLSKQRRAQKK) are enriched in basic residues. Composition is skewed to basic and acidic residues over residues 606–621 (AKVE…ERQQ) and 635–646 (TSGHKEELIPEK).

As to quaternary structure, component of the N-terminal acetyltransferase A (NatA) complex composed of NAA10 and NAA16. As to expression, highest levels in the kidney and testes. Moderate expression in the liver, thymus and skin.

Functionally, auxillary subunit of the N-terminal acetyltransferase A (NatA) complex which displays alpha (N-terminal) acetyltransferase activity. This Mus musculus (Mouse) protein is N-alpha-acetyltransferase 16, NatA auxiliary subunit (Naa16).